The following is a 211-amino-acid chain: Thymidylate kinase (211 aa).

11-18 (GPDGAGKT) contributes to the ATP binding site.

It belongs to the thymidylate kinase family.

It carries out the reaction dTMP + ATP = dTDP + ADP. Its function is as follows. Phosphorylation of dTMP to form dTDP in both de novo and salvage pathways of dTTP synthesis. The chain is Thymidylate kinase from Streptococcus agalactiae serotype Ia (strain ATCC 27591 / A909 / CDC SS700).